The primary structure comprises 131 residues: Leptin receptor gene-related protein (131 aa).

4 consecutive transmembrane segments (helical) span residues 7–27, 32–52, 69–89, and 100–120; these read LVAL…GCAL, VYWP…YFIA, LAYF…VVLA, and GLVL…FLVF.

The protein belongs to the OB-RGRP/VPS55 family. As to quaternary structure, interacts with LEPR. Interacts with RAB13. As to expression, widely distributed in the brain, with elevated expression in the hypothalamic regions, including the paraventricular nucleus. In the placenta, present at high levels in the junctional zone situated towards the maternal aspect and throughout the labyrinth zone in close proximity to the developing fetus.

It is found in the golgi apparatus membrane. Its subcellular location is the endosome membrane. Functionally, negatively regulates leptin receptor (LEPR) cell surface expression, and thus decreases response to leptin. Negatively regulates growth hormone (GH) receptor cell surface expression in liver. May play a role in liver resistance to GH during periods of reduced nutrient availability. This chain is Leptin receptor gene-related protein (Leprot), found in Mus musculus (Mouse).